A 394-amino-acid polypeptide reads, in one-letter code: Enoyl-[acyl-carrier-protein] reductase [NADH] (394 aa).

NAD(+) contacts are provided by residues Gly-48–Tyr-53, Tyr-74–Glu-75, Asp-111–Ala-112, and Leu-139–Ala-140. A substrate-binding site is contributed by Tyr-225. The Proton donor role is filled by Tyr-235. Residues Lys-244 and Leu-273–Thr-275 contribute to the NAD(+) site.

It belongs to the TER reductase family. Monomer.

The catalysed reaction is a 2,3-saturated acyl-[ACP] + NAD(+) = a (2E)-enoyl-[ACP] + NADH + H(+). It participates in lipid metabolism; fatty acid biosynthesis. Its function is as follows. Involved in the final reduction of the elongation cycle of fatty acid synthesis (FAS II). Catalyzes the reduction of a carbon-carbon double bond in an enoyl moiety that is covalently linked to an acyl carrier protein (ACP). The sequence is that of Enoyl-[acyl-carrier-protein] reductase [NADH] from Opitutus terrae (strain DSM 11246 / JCM 15787 / PB90-1).